Here is a 495-residue protein sequence, read N- to C-terminus: Lysine--tRNA ligase (495 aa).

2 residues coordinate Mg(2+): Glu406 and Glu413.

The protein belongs to the class-II aminoacyl-tRNA synthetase family. As to quaternary structure, homodimer. Mg(2+) is required as a cofactor.

Its subcellular location is the cytoplasm. The catalysed reaction is tRNA(Lys) + L-lysine + ATP = L-lysyl-tRNA(Lys) + AMP + diphosphate. The protein is Lysine--tRNA ligase of Leptospira interrogans serogroup Icterohaemorrhagiae serovar copenhageni (strain Fiocruz L1-130).